Here is an 82-residue protein sequence, read N- to C-terminus: uncharacterized protein (82 aa).

Helical transmembrane passes span 1 to 21 (MSAS…SVST), 22 to 42 (VLLG…LAAF), and 62 to 82 (WRLL…LTLL).

The protein localises to the cell membrane. This is an uncharacterized protein from Stutzerimonas stutzeri (Pseudomonas stutzeri).